Consider the following 119-residue polypeptide: Beta-2-microglobulin (119 aa).

Positions 1–20 are cleaved as a signal peptide; that stretch reads MARTVATFFLMLVSLACLDA. The Ig-like C1-type domain occupies 25–114; that stretch reads PQVQVYTRHP…VTLKEPKVVT (90 aa). Cys45 and Cys100 are disulfide-bonded.

This sequence belongs to the beta-2-microglobulin family. In terms of assembly, heterodimer of an alpha chain and a beta chain. Beta-2-microglobulin is the beta-chain of major histocompatibility complex class I molecules.

The protein resides in the secreted. Component of the class I major histocompatibility complex (MHC). Involved in the presentation of peptide antigens to the immune system. The protein is Beta-2-microglobulin (B2M) of Sigmodon hispidus (Hispid cotton rat).